Here is a 236-residue protein sequence, read N- to C-terminus: Peptidase E (236 aa).

Catalysis depends on charge relay system residues Ser-122, Asp-137, and His-159.

Belongs to the peptidase S51 family.

The protein localises to the cytoplasm. It carries out the reaction Dipeptidase E catalyzes the hydrolysis of dipeptides Asp-|-Xaa. It does not act on peptides with N-terminal Glu, Asn or Gln, nor does it cleave isoaspartyl peptides.. Hydrolyzes dipeptides containing N-terminal aspartate residues. May play a role in allowing the cell to use peptide aspartate to spare carbon otherwise required for the synthesis of the aspartate family of amino acids. The protein is Peptidase E of Shewanella oneidensis (strain ATCC 700550 / JCM 31522 / CIP 106686 / LMG 19005 / NCIMB 14063 / MR-1).